Here is a 249-residue protein sequence, read N- to C-terminus: DNA repair protein RecO (249 aa).

The protein belongs to the RecO family.

In terms of biological role, involved in DNA repair and RecF pathway recombination. The polypeptide is DNA repair protein RecO (Lactobacillus delbrueckii subsp. bulgaricus (strain ATCC 11842 / DSM 20081 / BCRC 10696 / JCM 1002 / NBRC 13953 / NCIMB 11778 / NCTC 12712 / WDCM 00102 / Lb 14)).